Consider the following 409-residue polypeptide: L-cysteine:1D-myo-inositol 2-amino-2-deoxy-alpha-D-glucopyranoside ligase (409 aa).

Residue Cys-43 coordinates Zn(2+). Residues 43–46, Thr-58, and 81–83 contribute to the L-cysteinyl-5'-AMP site; these read CGIT and NVT. A 'HIGH' region motif is present at residues 45 to 55; sequence ITPYDATHMGH. The short motif at 183–188 is the 'ERGGDP' region element; sequence ERGGDP. Trp-224 is a binding site for L-cysteinyl-5'-AMP. Position 228 (Cys-228) interacts with Zn(2+). 246–248 contributes to the L-cysteinyl-5'-AMP binding site; the sequence is GSD. His-253 provides a ligand contact to Zn(2+). Residue Val-280 coordinates L-cysteinyl-5'-AMP. The 'KMSKS' region signature appears at 286-290; the sequence is KMSKS.

Belongs to the class-I aminoacyl-tRNA synthetase family. MshC subfamily. In terms of assembly, monomer. It depends on Zn(2+) as a cofactor.

It catalyses the reaction 1D-myo-inositol 2-amino-2-deoxy-alpha-D-glucopyranoside + L-cysteine + ATP = 1D-myo-inositol 2-(L-cysteinylamino)-2-deoxy-alpha-D-glucopyranoside + AMP + diphosphate + H(+). Catalyzes the ATP-dependent condensation of GlcN-Ins and L-cysteine to form L-Cys-GlcN-Ins. This is L-cysteine:1D-myo-inositol 2-amino-2-deoxy-alpha-D-glucopyranoside ligase from Streptomyces griseus subsp. griseus (strain JCM 4626 / CBS 651.72 / NBRC 13350 / KCC S-0626 / ISP 5235).